A 186-amino-acid polypeptide reads, in one-letter code: MNSLQNHLLIAMPSLQDTFFERSVIYLCEHDEKGAMGLMINRPIGIDVNELLKQMELDEEPDPITSLGSAVLIGGPVNQERGFVLHTPQTNWNNSQSLTDEIMLTTSRDVLTSLGTDAAPENFIVTLGYAGWSKDQLEQELAENTWLSIPATKELLFDIGFNDRWQQATESLGFDIWQLSNQSGHA.

This sequence belongs to the UPF0301 (AlgH) family.

The sequence is that of UPF0301 protein Swoo_1337 from Shewanella woodyi (strain ATCC 51908 / MS32).